We begin with the raw amino-acid sequence, 602 residues long: Spermidine-citrate ligase (602 aa).

Residues 286 to 288, lysine 300, and arginine 312 each bind ATP; that span reads SLR.

It belongs to the IucA/IucC family.

The catalysed reaction is spermidine + citrate + ATP = N(8)-citryl-spermidine + AMP + diphosphate + H(+). It participates in siderophore biosynthesis; petrobactin biosynthesis. In terms of biological role, involved in the biosynthesis of petrobactin, a catecholate siderophore that functions in both iron acquisition and virulence. Catalyzes the ATP-dependent condensation of citric acid and spermidine to form N(8)-citryl-spermidine. It can also catalyze the condensation of several di- and triamine analogs of spermidine with citric acid and the condensation of the citric acid analog tricarballylic acid with spermidine. Required for growth in iron-depleted medium and for full virulence in a mouse model of infection. The protein is Spermidine-citrate ligase of Bacillus anthracis.